The chain runs to 1744 residues: Complement C4-B (1744 aa).

Residues 1–19 form the signal peptide; it reads MRLLWGLIWASSFFTLSLQ. A disulfide bridge links Cys68 with Cys97. Asn226 is a glycosylation site (N-linked (GlcNAc...) asparagine). The cysteines at positions 635 and 669 are disulfide-linked. Positions 676–679 are excised as a propeptide; sequence RKKR. Disulfide bonds link Cys702–Cys728, Cys703–Cys735, and Cys716–Cys736. The 35-residue stretch at 702–736 folds into the Anaphylatoxin-like domain; it reads CCQDGVTRLPMMRSCEQRAARVQQPDCREPFLSCC. The N-linked (GlcNAc...) asparagine glycan is linked to Asn862. Ser918 is subject to Phosphoserine. A cross-link (isoglutamyl cysteine thioester (Cys-Gln)) is located at residues 1010–1013; sequence CGEQ. N-linked (GlcNAc...) asparagine glycosylation is found at Asn1328 and Asn1391. Sulfotyrosine occurs at positions 1417, 1420, and 1422. A propeptide spanning residues 1447–1453 is cleaved from the precursor; that stretch reads RRNRRRR. 5 cysteine pairs are disulfide-bonded: Cys1471–Cys1535, Cys1583–Cys1588, Cys1595–Cys1673, Cys1618–Cys1742, and Cys1718–Cys1727. An NTR domain is found at 1595 to 1742; the sequence is CPRQRRALER…FLQEYGTQGC (148 aa).

As to quaternary structure, in absence of complement activation, circulates in blood as a disulfide-linked trimer of an alpha, beta and gamma chain. In terms of assembly, complement C4b is composed of complement C4b-A, complement C4 beta and complement C4 gamma chains that are associated via disulfide bonds. Non-enzymatic component of the C3 convertase, also named C4bC2b, composed of the serine protease complement C2b (C2), as well as complement C4b. Non-enzymatic component of the C5 convertase, also named C4bC2bC3b, composed of the serine protease complement C2b (C2), complement C3b, as well as complement C4b. Interacts with CR1 (via Sushi 1 and Sushi 2 domains). (Microbial infection) Binds B.burgdorferi OspC, the interaction is inhibited by complement factor C2. This binding may inhibit the complement cascade and allow the bacteria to survive in the host bloodstream. Prior to secretion, the single-chain precursor is enzymatically cleaved by plasminogen (PLG) to yield non-identical chains alpha, beta and gamma. During activation of the complement systems, the alpha chain is cleaved into C4a and C4b by different proteases depending on the complement pathway: C4b stays linked to the beta and gamma chains, while C4a is released in the plasma. The alpha chain is cleaved by C1S to generate C4a and C4b following activation by the classical complement system. The alpha chain is cleaved to generate C4a and C4b by MASP2 following activation by the lectin complement system. The alpha chain is cleaved by GZMK to generate C4a and C4b following activation by the GZMK complement system. Further degradation of C4b by C1 into the inactive fragments C4c and C4d blocks the generation of C3 convertase. The proteolytic cleavages often are incomplete so that many structural forms can be found in plasma. Post-translationally, upon activation, the internal thioester bond reacts with carbohydrate antigens on the target surface to form amide or ester bonds, leading to covalent association with the surface of pathogens. In terms of processing, complement C4b interacts with complement C3b via a thioester linkage. N- and O-glycosylated. O-glycosylated with a core 1 or possibly core 8 glycan. As to expression, complement component C4 is expressed at highest levels in the liver, at moderate levels in the adrenal cortex, adrenal medulla, thyroid gland, and the kidney, and at lowest levels in the heart, ovary, small intestine, thymus, pancreas and spleen. The extra-hepatic sites of expression may be important for the local protection and inflammatory response.

The protein resides in the secreted. Its subcellular location is the synapse. It localises to the cell projection. It is found in the axon. The protein localises to the dendrite. The protein resides in the cell surface. Functionally, precursor of non-enzymatic components of the classical, lectin and GZMK complement pathways, which consist in a cascade of proteins that leads to phagocytosis and breakdown of pathogens and signaling that strengthens the adaptive immune system. In terms of biological role, non-enzymatic component of C3 and C5 convertases. Generated following cleavage by complement proteases (C1S, MASP2 or GZMK, depending on the complement pathway), it covalently attaches to the surface of pathogens, where it acts as an opsonin that marks the surface of antigens for removal. It then recruits the serine protease complement C2b to form the C3 and C5 convertases, which cleave and activate C3 and C5, respectively, the next components of the complement pathways. Complement C4b-B isotype catalyzes the transacylation of the thioester carbonyl group to form ester bonds with carbohydrate antigens, while C4b-A isotype is responsible for effective binding to form amide bonds with immune aggregates or protein antigens. Its function is as follows. Putative humoral mediator released following cleavage by complement proteases (C1S, MASP2 or GZMK, depending on the complement pathway). While it is strongly similar to anaphylatoxins, its role is unclear. Was reported to act as a mediator of local inflammatory process; however these effects were probably due to contamination with C3a and/C5a anaphylatoxins in biological assays. The polypeptide is Complement C4-B (Homo sapiens (Human)).